Reading from the N-terminus, the 435-residue chain is Citrate synthase (435 aa).

Residues His-311 and Asp-370 contribute to the active site.

The protein belongs to the citrate synthase family. Homohexamer.

It carries out the reaction oxaloacetate + acetyl-CoA + H2O = citrate + CoA + H(+). Its pathway is carbohydrate metabolism; tricarboxylic acid cycle; isocitrate from oxaloacetate: step 1/2. The protein is Citrate synthase (gltA) of Rickettsia africae (strain ESF-5).